Here is a 343-residue protein sequence, read N- to C-terminus: MKFLDEAKVYVRSGDGGAGCVSFRREKFIEFGGPDGGDGGRGGDVWAECVEGLNTLIDYRYQQHFKAKKGEHGSGRNRAGAKGGDVVLKVPAGTQILAEDRETLVADLTRVGQRVLLARGGNGGFGNAYFTTSTNRAPRHANPGQEGQEHWLWLRLKLIADAGLVGLPNAGKSTFLATVTAAKPKIADYPFTTLHPGLGVVRVDTREFVLADIPGLIEGAHEGVGLGDRFLAHVERCRVLLHLVEGTSEDAGAAYRLVRAELEAYGHGLADKPEIVALSKADILDPERLEAQVASLEAACGRRPLVISAATRRGVPEALRALLAAMDRAQAEAAPEKAEAWQP.

The Obg domain maps to 1–159 (MKFLDEAKVY…HWLWLRLKLI (159 aa)). In terms of domain architecture, OBG-type G spans 160–327 (ADAGLVGLPN…ALRALLAAMD (168 aa)). Residues 166 to 173 (GLPNAGKS), 191 to 195 (FTTLH), 212 to 215 (DIPG), 279 to 282 (SKAD), and 308 to 310 (SAA) contribute to the GTP site. Positions 173 and 193 each coordinate Mg(2+).

The protein belongs to the TRAFAC class OBG-HflX-like GTPase superfamily. OBG GTPase family. Monomer. Requires Mg(2+) as cofactor.

It localises to the cytoplasm. Functionally, an essential GTPase which binds GTP, GDP and possibly (p)ppGpp with moderate affinity, with high nucleotide exchange rates and a fairly low GTP hydrolysis rate. Plays a role in control of the cell cycle, stress response, ribosome biogenesis and in those bacteria that undergo differentiation, in morphogenesis control. The polypeptide is GTPase Obg (Methylobacterium sp. (strain 4-46)).